Consider the following 130-residue polypeptide: C-C motif chemokine 28 (130 aa).

The N-terminal stretch at 1-16 (MQQAGLTLMAVAVCVA) is a signal peptide. 2 disulfide bridges follow: Cys30-Cys58 and Cys31-Cys73. The N-linked (GlcNAc...) asparagine glycan is linked to Asn78. The segment at 92-130 (KNGRENVCSGKKQPSRKDRKGHTTRKHRTRGTHRHEASR) is disordered. Over residues 104 to 124 (QPSRKDRKGHTTRKHRTRGTH) the composition is skewed to basic residues.

The protein belongs to the intercrine beta (chemokine CC) family. Mainly expressed in testis, epithelial cells of normal colon, kidney, Peyer patches, lymph nodes. Also found in lower levels in brain, spleen and lung.

The protein localises to the secreted. Its function is as follows. Chemotactic for resting CD4, CD8 T-cells and eosinophils. Binds to CCR10 and induces calcium mobilization in a dose-dependent manner. This chain is C-C motif chemokine 28 (Ccl28), found in Mus musculus (Mouse).